A 374-amino-acid polypeptide reads, in one-letter code: Probable quinol oxidase subunit 2 (374 aa).

Residues 1-19 (MSKFKSLLLLFGTLILLSG) form the signal peptide. Residue C20 is the site of N-palmitoyl cysteine attachment. C20 is lipidated: S-diacylglycerol cysteine. The next 2 membrane-spanning stretches (helical) occupy residues 43–63 (SIIF…IFIF) and 82–102 (IETI…IPTV). Residues 317-374 (ERHGMKPMILGNNEKYDNEFKKEEDHNSKEMEKISKGAKDENASKLHKKEHDDHGGGH) are disordered. Positions 330 to 374 (EKYDNEFKKEEDHNSKEMEKISKGAKDENASKLHKKEHDDHGGGH) are enriched in basic and acidic residues.

The protein belongs to the cytochrome c oxidase subunit 2 family.

The protein resides in the cell membrane. It carries out the reaction 2 a quinol + O2 = 2 a quinone + 2 H2O. Catalyzes quinol oxidation with the concomitant reduction of oxygen to water. Subunit II transfers the electrons from a quinol to the binuclear center of the catalytic subunit I. This is Probable quinol oxidase subunit 2 (qoxA) from Staphylococcus epidermidis (strain ATCC 12228 / FDA PCI 1200).